The primary structure comprises 147 residues: Ribonuclease H (147 aa).

In terms of domain architecture, RNase H type-1 spans 1-142 (MREVIIYTDG…CDELARAAIA (142 aa)). Mg(2+) is bound by residues Asp-9, Glu-47, Asp-69, and Asp-134.

This sequence belongs to the RNase H family. In terms of assembly, monomer. Mg(2+) serves as cofactor.

The protein resides in the cytoplasm. The enzyme catalyses Endonucleolytic cleavage to 5'-phosphomonoester.. Functionally, endonuclease that specifically degrades the RNA of RNA-DNA hybrids. In Symbiobacterium thermophilum (strain DSM 24528 / JCM 14929 / IAM 14863 / T), this protein is Ribonuclease H.